A 216-amino-acid chain; its full sequence is MRVAIIDYGSGNLRSATKAFERAAREGGISAEIDLTADADRVRTADRIVLPGVGAYADCAAGLRAVDGMWEAVEDVAIAQSRPFLGICVGMQLMSERGLEKTVTHGFGWISGDVKEITPTDPALKIPQIGWNTIELRRQHPLFAGIPTGPEGLHAYFVHSYHLDAKKPDEILAVADYGGPVTAAVARDNLVGTQFHPEKSQALGLALITNFLRWRP.

The region spanning 2–216 (RVAIIDYGSG…LITNFLRWRP (215 aa)) is the Glutamine amidotransferase type-1 domain. The active-site Nucleophile is cysteine 88. Catalysis depends on residues histidine 196 and glutamate 198.

As to quaternary structure, heterodimer of HisH and HisF.

Its subcellular location is the cytoplasm. The catalysed reaction is 5-[(5-phospho-1-deoxy-D-ribulos-1-ylimino)methylamino]-1-(5-phospho-beta-D-ribosyl)imidazole-4-carboxamide + L-glutamine = D-erythro-1-(imidazol-4-yl)glycerol 3-phosphate + 5-amino-1-(5-phospho-beta-D-ribosyl)imidazole-4-carboxamide + L-glutamate + H(+). It catalyses the reaction L-glutamine + H2O = L-glutamate + NH4(+). It participates in amino-acid biosynthesis; L-histidine biosynthesis; L-histidine from 5-phospho-alpha-D-ribose 1-diphosphate: step 5/9. IGPS catalyzes the conversion of PRFAR and glutamine to IGP, AICAR and glutamate. The HisH subunit catalyzes the hydrolysis of glutamine to glutamate and ammonia as part of the synthesis of IGP and AICAR. The resulting ammonia molecule is channeled to the active site of HisF. This is Imidazole glycerol phosphate synthase subunit HisH from Mesorhizobium japonicum (strain LMG 29417 / CECT 9101 / MAFF 303099) (Mesorhizobium loti (strain MAFF 303099)).